The chain runs to 407 residues: Odorant receptor 67a (407 aa).

Residues 1–40 (MDNVAEMPEEKYVEVDDFLRLAVKFYNTLGIDPYETGRKR) are Cytoplasmic-facing. Residues 41–61 (TIWFQIYFALNMFNMVFSFYA) form a helical membrane-spanning segment. Topologically, residues 62–79 (EVATLVDRLRDNENFLES) are extracellular. Residues 80-100 (CILLSYVSFVVMGLSKIGAVM) form a helical membrane-spanning segment. At 101–144 (KKKPKMTALVRQLETCFPSPSAKVQEEYAVKSWLKRCHIYTKGF) the chain is on the cytoplasmic side. A helical transmembrane segment spans residues 145–165 (GGLFMIMYFAHALIPLFIYFI). Residues 166-208 (QRVLLHYPDAKQIMPFYQLEPWEFRDSWLFYPSYFHQSSAGYT) lie on the Extracellular side of the membrane. A helical membrane pass occupies residues 209–229 (ATCGSIAGDLMIFAVVLQVIM). The Cytoplasmic portion of the chain corresponds to 230 to 278 (HYERLAKVLREFKIQAHNAPNGAKEDIRKLQSLVANHIDILRLTDLMNE). Residues 279-300 (VFGIPLLLNFIASALLVCLVGV) traverse the membrane as a helical segment. At 301 to 314 (QLTIALSPEYFCKQ) the chain is on the extracellular side. A helical membrane pass occupies residues 315 to 331 (MLFLISVLLEVYLLCSF). The Cytoplasmic portion of the chain corresponds to 332 to 378 (SQRLIDASENVGHAAYDMDWLGSDKRFKKILIFISMRSQKPVCLKAT). Residues 379–401 (VVLDLSMPTMSIFLGMSYKFFCA) traverse the membrane as a helical segment. Over 402–407 (VRTMYQ) the chain is Extracellular.

The protein belongs to the insect chemoreceptor superfamily. Heteromeric odorant receptor channel (TC 1.A.69) family. Or49a subfamily. As to quaternary structure, interacts with Orco. Complexes exist early in the endomembrane system in olfactory sensory neurons (OSNs), coupling these complexes to the conserved ciliary trafficking pathway. As to expression, expressed in olfactory sensory neurons in the antenna.

Its subcellular location is the cell membrane. Odorant receptor which mediates acceptance or avoidance behavior, depending on its substrates. The odorant receptor repertoire encodes a large collection of odor stimuli that vary widely in identity, intensity, and duration. Forms a complex with Orco to form odorant-sensing units, providing sensitive and prolonged odorant signaling and calcium permeability. Involved in the behavioral responses to benzaldehyde and acetophenone. The chain is Odorant receptor 67a (Or67a) from Drosophila melanogaster (Fruit fly).